A 392-amino-acid polypeptide reads, in one-letter code: CCA-adding enzyme (392 aa).

2 residues coordinate ATP: Ser45 and Lys48. CTP contacts are provided by Ser45 and Lys48. Mg(2+) contacts are provided by Asp55, Asp57, and Glu106. Residues His129, Lys148, and Tyr157 each coordinate ATP. Residues His129, Lys148, and Tyr157 each contribute to the CTP site.

The protein belongs to the tRNA nucleotidyltransferase/poly(A) polymerase family. Archaeal CCA-adding enzyme subfamily. Homodimer. It depends on Mg(2+) as a cofactor.

It catalyses the reaction a tRNA precursor + 2 CTP + ATP = a tRNA with a 3' CCA end + 3 diphosphate. The catalysed reaction is a tRNA with a 3' CCA end + 2 CTP + ATP = a tRNA with a 3' CCACCA end + 3 diphosphate. Functionally, catalyzes the addition and repair of the essential 3'-terminal CCA sequence in tRNAs without using a nucleic acid template. Adds these three nucleotides in the order of C, C, and A to the tRNA nucleotide-73, using CTP and ATP as substrates and producing inorganic pyrophosphate. tRNA 3'-terminal CCA addition is required both for tRNA processing and repair. Also involved in tRNA surveillance by mediating tandem CCA addition to generate a CCACCA at the 3' terminus of unstable tRNAs. While stable tRNAs receive only 3'-terminal CCA, unstable tRNAs are marked with CCACCA and rapidly degraded. This is CCA-adding enzyme from Nanoarchaeum equitans (strain Kin4-M).